The primary structure comprises 225 residues: Thymidylate kinase (225 aa).

Position 10–17 (10–17 (GGEGAGKT)) interacts with ATP.

Belongs to the thymidylate kinase family.

The enzyme catalyses dTMP + ATP = dTDP + ADP. Functionally, phosphorylation of dTMP to form dTDP in both de novo and salvage pathways of dTTP synthesis. In Oceanobacillus iheyensis (strain DSM 14371 / CIP 107618 / JCM 11309 / KCTC 3954 / HTE831), this protein is Thymidylate kinase.